Consider the following 48-residue polypeptide: uncharacterized protein (48 aa).

The signal sequence occupies residues 1-21 (MLENNVFRLMILMGGVIALIA).

This is an uncharacterized protein from Bacillus anthracis.